The sequence spans 121 residues: Large ribosomal subunit protein uL14 (121 aa).

This sequence belongs to the universal ribosomal protein uL14 family. In terms of assembly, part of the 50S ribosomal subunit. Forms a cluster with proteins L3 and L19. In the 70S ribosome, L14 and L19 interact and together make contacts with the 16S rRNA in bridges B5 and B8.

Functionally, binds to 23S rRNA. Forms part of two intersubunit bridges in the 70S ribosome. This is Large ribosomal subunit protein uL14 from Prochlorococcus marinus (strain MIT 9303).